Reading from the N-terminus, the 231-residue chain is Uracil-DNA glycosylase (231 aa).

Asp74 functions as the Proton acceptor in the catalytic mechanism.

This sequence belongs to the uracil-DNA glycosylase (UDG) superfamily. UNG family.

The protein resides in the cytoplasm. The catalysed reaction is Hydrolyzes single-stranded DNA or mismatched double-stranded DNA and polynucleotides, releasing free uracil.. Functionally, excises uracil residues from the DNA which can arise as a result of misincorporation of dUMP residues by DNA polymerase or due to deamination of cytosine. The chain is Uracil-DNA glycosylase from Campylobacter jejuni subsp. jejuni serotype O:2 (strain ATCC 700819 / NCTC 11168).